A 697-amino-acid chain; its full sequence is Elongation factor G (697 aa).

A tr-type G domain is found at 8-290; the sequence is ERYRNIGIMA…AVLSYMPSPV (283 aa). Residues 17–24, 88–92, and 142–145 each bind GTP; these read AHIDAGKT, DTPGH, and NKMD.

It belongs to the TRAFAC class translation factor GTPase superfamily. Classic translation factor GTPase family. EF-G/EF-2 subfamily.

It localises to the cytoplasm. Its function is as follows. Catalyzes the GTP-dependent ribosomal translocation step during translation elongation. During this step, the ribosome changes from the pre-translocational (PRE) to the post-translocational (POST) state as the newly formed A-site-bound peptidyl-tRNA and P-site-bound deacylated tRNA move to the P and E sites, respectively. Catalyzes the coordinated movement of the two tRNA molecules, the mRNA and conformational changes in the ribosome. The polypeptide is Elongation factor G (Nitrosococcus oceani (strain ATCC 19707 / BCRC 17464 / JCM 30415 / NCIMB 11848 / C-107)).